We begin with the raw amino-acid sequence, 42 residues long: Large ribosomal subunit protein bL36 (42 aa).

It belongs to the bacterial ribosomal protein bL36 family.

This chain is Large ribosomal subunit protein bL36, found in Ehrlichia ruminantium (strain Gardel).